The chain runs to 69 residues: Putative membrane protein insertion efficiency factor (69 aa).

It belongs to the UPF0161 family.

It localises to the cell membrane. In terms of biological role, could be involved in insertion of integral membrane proteins into the membrane. This chain is Putative membrane protein insertion efficiency factor, found in Clostridium kluyveri (strain NBRC 12016).